Reading from the N-terminus, the 106-residue chain is Large ribosomal subunit protein eL42 (106 aa).

This sequence belongs to the eukaryotic ribosomal protein eL42 family.

The polypeptide is Large ribosomal subunit protein eL42 (RPL44) (Schwanniomyces occidentalis (Yeast)).